Reading from the N-terminus, the 224-residue chain is Putative ribonuclease Z (224 aa).

Residues Asp-120 and His-184 each contribute to the Zn(2+) site.

This sequence belongs to the RNase Z family. Homodimer. Zn(2+) is required as a cofactor.

The enzyme catalyses Endonucleolytic cleavage of RNA, removing extra 3' nucleotides from tRNA precursor, generating 3' termini of tRNAs. A 3'-hydroxy group is left at the tRNA terminus and a 5'-phosphoryl group is left at the trailer molecule.. In terms of biological role, zinc phosphodiesterase, which displays some tRNA 3'-processing endonuclease activity. Probably involved in tRNA maturation, by removing a 3'-trailer from precursor tRNA. The chain is Putative ribonuclease Z (rnz) from Mycobacterium tuberculosis (strain CDC 1551 / Oshkosh).